The sequence spans 201 residues: Potassium-transporting ATPase KdpC subunit (201 aa).

A helical transmembrane segment spans residues 13 to 33 (IIFIIFTILCGGIYTIFITGI).

This sequence belongs to the KdpC family. In terms of assembly, the system is composed of three essential subunits: KdpA, KdpB and KdpC.

Its subcellular location is the cell membrane. In terms of biological role, part of the high-affinity ATP-driven potassium transport (or Kdp) system, which catalyzes the hydrolysis of ATP coupled with the electrogenic transport of potassium into the cytoplasm. This subunit acts as a catalytic chaperone that increases the ATP-binding affinity of the ATP-hydrolyzing subunit KdpB by the formation of a transient KdpB/KdpC/ATP ternary complex. The chain is Potassium-transporting ATPase KdpC subunit from Clostridium botulinum (strain Alaska E43 / Type E3).